The chain runs to 769 residues: Serine/threonine-protein kinase PLK4 (769 aa).

The 254-residue stretch at 14–267 (YEVQHLLGKG…LEAVLCHPFM (254 aa)) folds into the Protein kinase domain. Residues 20 to 28 (LGKGGFATV) and Lys-43 each bind ATP. Asp-138 serves as the catalytic Proton acceptor. Residues 381–498 (EDRISVPPLN…ARFVGLVKSK (118 aa)) enclose the Cryptic POLO box 1 (CPB1) domain. One can recognise a Cryptic POLO box 2 (CPB2) domain in the interval 499 to 602 (TPKVTYFSTL…GRRPITDVQP (104 aa)). Residues 660–739 (PIKRINVPDI…IPNIQLKLKT (80 aa)) enclose the POLO box domain.

It belongs to the protein kinase superfamily. Ser/Thr protein kinase family. CDC5/Polo subfamily. Homodimer. Post-translationally, ubiquitinated by the SCF(Slimb) ubiquitin ligase complex; leading to its degradation by the proteasome during interphase and regulating centriole number and ensuring the block to centriole reduplication.

It is found in the cytoplasm. The protein localises to the cytoskeleton. Its subcellular location is the microtubule organizing center. The protein resides in the centrosome. It localises to the centriole. The enzyme catalyses L-seryl-[protein] + ATP = O-phospho-L-seryl-[protein] + ADP + H(+). It carries out the reaction L-threonyl-[protein] + ATP = O-phospho-L-threonyl-[protein] + ADP + H(+). Functionally, serine/threonine-protein kinase that plays a central role in centriole duplication. Able to trigger procentriole formation on the surface of the mother centriole cylinder, using mother centriole as a platform, leading to the recruitment of centriole biogenesis proteins such as sas-6. When overexpressed, it is able to induce centrosome amplification through the simultaneous generation of multiple procentrioles adjoining each parental centriole during S phase. Centrosome amplification following overexpression can initiate tumorigenesis, highlighting the importance of centrosome regulation in cancers. This chain is Serine/threonine-protein kinase PLK4 (SAK), found in Drosophila simulans (Fruit fly).